A 364-amino-acid polypeptide reads, in one-letter code: Polygalacturonase (364 aa).

The first 21 residues, 1–21 (MVAYALTSMLLSAGALVAAAP), serve as a signal peptide directing secretion. The propeptide occupies 22–27 (SGLDAR). Cysteines 30 and 45 form a disulfide. PbH1 repeat units follow at residues 158–188 (VTGLTLDRITIDNSAGDSAGAHNTDAFDIGS), 189–210 (SSGITISNANIKNQDDCVAINS), 211–231 (GSDIHVTNCQCSGGHGVSIGS), 240–261 (VKGVVVSGTTIANSDNGVRIKT), 269–291 (VSDITYENITLKNIAKYGIVIEQ), and 303–348 (TTGV…SITG). The active-site Proton donor is Asp203. Cys205 and Cys221 form a disulfide bridge. His225 is a catalytic residue. A glycan (N-linked (GlcNAc...) asparagine) is linked at Asn276. Cys331 and Cys336 are disulfide-bonded. N-linked (GlcNAc...) asparagine glycosylation is present at Asn340. Cys355 and Cys364 are joined by a disulfide.

It belongs to the glycosyl hydrolase 28 family.

The protein localises to the secreted. The catalysed reaction is (1,4-alpha-D-galacturonosyl)n+m + H2O = (1,4-alpha-D-galacturonosyl)n + (1,4-alpha-D-galacturonosyl)m.. Involved in maceration and soft-rotting of plant tissue. Hydrolyzes the 1,4-alpha glycosidic bonds of de-esterified pectate in the smooth region of the plant cell wall. This is Polygalacturonase (PGN1) from Cochliobolus carbonum (Maize leaf spot fungus).